A 754-amino-acid polypeptide reads, in one-letter code: ToMV susceptible protein tm-1(GCR26) (754 aa).

The interval M1–S201 is N-terminal inhibitory domain NN. ATP is bound by residues D18–K20, T55, R92, and G124–G127. The N-terminal inhibitory domain NC stretch occupies residues K211–K431.

This sequence belongs to the UPF0261 family. In terms of assembly, homodimer. As to quaternary structure, (Microbial infection) Binds, via an ATP bridge, to the tobamoviruses avirulent (Avr) replication proteins (large and small subunits, e.g. tobacco mild green mosaic virus (TMGMV) AC P18339 and pepper mild mottle virus (PMMoV) AC P89657) to inhibit their function after the translation of tobamoviruses RNA, but before the viral replication complex formation on the membrane surfaces; this interaction is not possible with resistance-breaking strains replication proteins.

Inhibitor of viral RNA replication which confers resistance to some tobamoviruses including tobacco mild green mosaic virus (TMGMV) and pepper mild mottle virus (PMMoV), but not to tomato mosaic virus (ToMV strains L, ToMV0 and ToMV1-2) and tobacco mosaic virus (TMV). Prevents tobamoviruses RNA replication by affecting the association of tobamoviruses replication proteins (large and small subunits) with host membrane-associated proteins (e.g. TOM1, TOM2A and ARL8), thus inhibiting the replication complex formation on the membranes and avoiding viral negative-strand RNA synthesis. The polypeptide is ToMV susceptible protein tm-1(GCR26) (Solanum lycopersicum (Tomato)).